The primary structure comprises 147 residues: MQTIIKREGLKRSKFHAKRKETLATLPKYEARAVARFVRISPRKARSVINSIRGKNVSEAFNLLEFSSKKAARIVYNVLKSAVANATNNLGLSEENLYVAACYVNDGPRMKRVWPRGRGRADIIQKRMSHITVIVRDREKENETKAK.

Belongs to the universal ribosomal protein uL22 family. Part of the 50S ribosomal subunit.

In terms of biological role, this protein binds specifically to 23S rRNA; its binding is stimulated by other ribosomal proteins, e.g. L4, L17, and L20. It is important during the early stages of 50S assembly. It makes multiple contacts with different domains of the 23S rRNA in the assembled 50S subunit and ribosome. Functionally, the globular domain of the protein is located near the polypeptide exit tunnel on the outside of the subunit, while an extended beta-hairpin is found that lines the wall of the exit tunnel in the center of the 70S ribosome. The protein is Large ribosomal subunit protein uL22 of Fervidobacterium nodosum (strain ATCC 35602 / DSM 5306 / Rt17-B1).